Here is a 152-residue protein sequence, read N- to C-terminus: Deoxyuridine 5'-triphosphate nucleotidohydrolase (152 aa).

Substrate contacts are provided by residues 71-73 (RSG), N84, and 88-90 (LID).

The protein belongs to the dUTPase family. The cofactor is Mg(2+).

The catalysed reaction is dUTP + H2O = dUMP + diphosphate + H(+). It participates in pyrimidine metabolism; dUMP biosynthesis; dUMP from dCTP (dUTP route): step 2/2. Functionally, this enzyme is involved in nucleotide metabolism: it produces dUMP, the immediate precursor of thymidine nucleotides and it decreases the intracellular concentration of dUTP so that uracil cannot be incorporated into DNA. The sequence is that of Deoxyuridine 5'-triphosphate nucleotidohydrolase from Xanthomonas campestris pv. campestris (strain 8004).